The sequence spans 182 residues: Protein canopy homolog 2 (182 aa).

A signal peptide spans 1 to 20 (MKGWGWLALLLGALLGTAWA). The Saposin B-type domain occupies 24 to 175 (QDLHCGACRA…KRTDLCDHAL (152 aa)). Intrachain disulfides connect C28-C171, C31-C164, and C86-C137. Phosphoserine is present on S115. The Prevents secretion from ER signature appears at 179–182 (HDEL).

Belongs to the canopy family. Interacts with MYLIP/MIR. In terms of tissue distribution, expressed in different tissues. Highest levels are detected in adult placenta, liver and pancreas.

It localises to the endoplasmic reticulum. Functionally, positive regulator of neurite outgrowth by stabilizing myosin regulatory light chain (MRLC). It prevents MIR-mediated MRLC ubiquitination and its subsequent proteasomal degradation. The chain is Protein canopy homolog 2 (CNPY2) from Homo sapiens (Human).